The following is a 154-amino-acid chain: SsrA-binding protein (154 aa).

Basic and acidic residues predominate over residues 123-142; it reads AEHDKRHTIKDRDWQREQGR. The segment at 123–154 is disordered; the sequence is AEHDKRHTIKDRDWQREQGRLMRHKVSAPHKD. Residues 143 to 154 show a composition bias toward basic residues; the sequence is LMRHKVSAPHKD.

This sequence belongs to the SmpB family.

The protein resides in the cytoplasm. Functionally, required for rescue of stalled ribosomes mediated by trans-translation. Binds to transfer-messenger RNA (tmRNA), required for stable association of tmRNA with ribosomes. tmRNA and SmpB together mimic tRNA shape, replacing the anticodon stem-loop with SmpB. tmRNA is encoded by the ssrA gene; the 2 termini fold to resemble tRNA(Ala) and it encodes a 'tag peptide', a short internal open reading frame. During trans-translation Ala-aminoacylated tmRNA acts like a tRNA, entering the A-site of stalled ribosomes, displacing the stalled mRNA. The ribosome then switches to translate the ORF on the tmRNA; the nascent peptide is terminated with the 'tag peptide' encoded by the tmRNA and targeted for degradation. The ribosome is freed to recommence translation, which seems to be the essential function of trans-translation. The sequence is that of SsrA-binding protein from Leptothrix cholodnii (strain ATCC 51168 / LMG 8142 / SP-6) (Leptothrix discophora (strain SP-6)).